The following is a 313-amino-acid chain: MNTFSQVWVFSDTPSRLPELMNGAQALANQINTFVLNDADGAQAIQLGANHVWKLSGKPDDRMIEDYADVMADTIRQHGADGLVLLPNTRRGKLLAAKLGYRLNAAVSNDASAVSVQDGKATVKHMVYGGLAIGEERIATPYAVLTISSGTFDVAQPDASRTGETHTVEWQAPAVAITRTATQARQSNSVDLDKARLVVSVGRGIGSKENIALAEQLCKAIGAELACSRPVAENEKWMEHERYVGISNLMLKPELYLAVGISGQIQHMVGANASQTIFAINKDKNAPIFQFADYGIVGDAVKILPALTAALAR.

FAD is bound at residue 255 to 283 (LYLAVGISGQIQHMVGANASQTIFAINKD).

This sequence belongs to the ETF alpha-subunit/FixB family. Heterodimer of FixA and FixB.

It functions in the pathway amine and polyamine metabolism; carnitine metabolism. Functionally, required for anaerobic carnitine reduction. May bring reductant to CaiA. This is Protein FixB from Escherichia coli O127:H6 (strain E2348/69 / EPEC).